The sequence spans 523 residues: Rho guanine nucleotide exchange factor 8 (523 aa).

Positions 44 to 57 (VESNTPESQNSDSF) are enriched in polar residues. Disordered regions lie at residues 44–83 (VESN…ERQQ) and 442–523 (ETSD…KDRH). One can recognise a PRONE domain in the interval 76-440 (GKRSERQQAD…TLALKQTLLA (365 aa)). Positions 465–475 (EAEKHDPHSKT) are enriched in basic and acidic residues.

Homodimer. The homodimer interacts with ARAC5/ROP4. Interacts with ARAC11/ROP1 and ARAC10/ROP11. Interacts with PRK6. In terms of tissue distribution, expressed in pollen grains and pollen tubes.

Its subcellular location is the cell membrane. Its function is as follows. Guanine-nucleotide exchange factor (GEF) that acts as an activator of Rop (Rho of plants) GTPases by promoting the exchange of GDP for GTP. Active as homodimer. The chain is Rho guanine nucleotide exchange factor 8 from Arabidopsis thaliana (Mouse-ear cress).